Here is a 451-residue protein sequence, read N- to C-terminus: Trimethylamine monooxygenase (451 aa).

Positions 12, 37, 39, 45, 46, and 62 each coordinate FAD. The NADP(+) site is built by tryptophan 70 and asparagine 72. FAD-binding residues include asparagine 72 and valine 125. Residues serine 204, serine 205, serine 207, and arginine 228 each contribute to the NADP(+) site. Glutamine 317 and threonine 320 together coordinate FAD. Arginine 411 serves as a coordination point for NADP(+).

This sequence belongs to the FMO family. FAD serves as cofactor.

It carries out the reaction trimethylamine + NADPH + O2 = trimethylamine N-oxide + NADP(+) + H2O. Its function is as follows. Catalyzes the oxidation of trimethylamine (TMA) to produce trimethylamine N-oxide (TMAO). In vitro, has a broad substrate specificity, oxidizing many nitrogen- and sulfur-containing compounds, including dimethylamine (DMA), dimethylsulfide (DMS), dimethylsulfoxide (DMSO), cysteamine, methimazole and dimethylaniline. This Methylocella silvestris (strain DSM 15510 / CIP 108128 / LMG 27833 / NCIMB 13906 / BL2) protein is Trimethylamine monooxygenase.